Here is a 227-residue protein sequence, read N- to C-terminus: Killer cell lectin-like receptor subfamily B member 1A (227 aa).

Over 1-45 (MDTARVYFGLKPPRTPGAWHESPPSLPPDACRCPRSHRLALKLSC) the chain is Cytoplasmic. The LCK-binding motif motif lies at 31 to 34 (CRCP). The helical; Signal-anchor for type II membrane protein transmembrane segment at 46–66 (AGLILLVVTLIGMSVLVRVLI) threads the bilayer. Over 67–227 (QKPSIEKCYV…TLSNYVGYGH (161 aa)) the chain is Extracellular. The C-type lectin domain maps to 93–212 (ECPQDWLSHR…NSDNRWICQK (120 aa)). 3 disulfides stabilise this stretch: cysteine 94/cysteine 105, cysteine 122/cysteine 210, and cysteine 189/cysteine 202.

In terms of assembly, homodimer; disulfide-linked. Interacts with tyrosine kinase LCK. As to expression, expressed in natural killer cells.

The protein resides in the membrane. Functionally, plays a stimulatory role on natural killer (NK) cell cytotoxicity. The protein is Killer cell lectin-like receptor subfamily B member 1A (Klrb1a) of Mus musculus (Mouse).